The sequence spans 260 residues: Adenosylcobinamide-GDP ribazoletransferase (260 aa).

8 helical membrane passes run 3–23 (APLW…LPAW), 36–56 (FAPW…LVLI), 60–80 (WPTS…SGGL), 108–128 (VGAS…AALL), 133–153 (LAPL…LWAM), 180–200 (ALPA…LMIV), 206–226 (MVLM…PELL), and 239–259 (GASV…LLTA).

It belongs to the CobS family. The cofactor is Mg(2+).

The protein resides in the cell inner membrane. The catalysed reaction is alpha-ribazole + adenosylcob(III)inamide-GDP = adenosylcob(III)alamin + GMP + H(+). The enzyme catalyses alpha-ribazole 5'-phosphate + adenosylcob(III)inamide-GDP = adenosylcob(III)alamin 5'-phosphate + GMP + H(+). It functions in the pathway cofactor biosynthesis; adenosylcobalamin biosynthesis; adenosylcobalamin from cob(II)yrinate a,c-diamide: step 7/7. Functionally, joins adenosylcobinamide-GDP and alpha-ribazole to generate adenosylcobalamin (Ado-cobalamin). Also synthesizes adenosylcobalamin 5'-phosphate from adenosylcobinamide-GDP and alpha-ribazole 5'-phosphate. The polypeptide is Adenosylcobinamide-GDP ribazoletransferase (Prochlorococcus marinus (strain MIT 9303)).